A 121-amino-acid polypeptide reads, in one-letter code: Ribosome-binding factor A (121 aa).

Belongs to the RbfA family. Monomer. Binds 30S ribosomal subunits, but not 50S ribosomal subunits or 70S ribosomes.

The protein resides in the cytoplasm. Its function is as follows. One of several proteins that assist in the late maturation steps of the functional core of the 30S ribosomal subunit. Associates with free 30S ribosomal subunits (but not with 30S subunits that are part of 70S ribosomes or polysomes). Required for efficient processing of 16S rRNA. May interact with the 5'-terminal helix region of 16S rRNA. The sequence is that of Ribosome-binding factor A from Hydrogenovibrio crunogenus (strain DSM 25203 / XCL-2) (Thiomicrospira crunogena).